A 696-amino-acid polypeptide reads, in one-letter code: GPI mannosyltransferase 4 (696 aa).

Helical transmembrane passes span 100-120, 125-142, 149-169, 185-205, 227-247, and 338-358; these read WQLE…IYTL, NDYC…RFEI, SSWI…EMAM, NTVV…ESIS, AMST…LFGA, and YVHL…ASLG.

The protein belongs to the glycosyltransferase 22 family. PIGZ subfamily.

It localises to the endoplasmic reticulum membrane. It participates in glycolipid biosynthesis; glycosylphosphatidylinositol-anchor biosynthesis. Mannosyltransferase involved in glycosylphosphatidylinositol-anchor biosynthesis. Transfers a fourth mannose to some trimannosyl-GPIs during GPI precursor assembly. This Drosophila melanogaster (Fruit fly) protein is GPI mannosyltransferase 4.